The chain runs to 255 residues: Myb-related protein Zm38 (255 aa).

HTH myb-type domains follow at residues 9-61 (KAHT…INYL) and 62-116 (RPDL…RRKL). 2 DNA-binding regions (H-T-H motif) span residues 37-61 (WRSLPKAAGLLRCGKSCRLRWINYL) and 89-112 (WSLIAARLPGRTDNEIKNYWNTHV).

It localises to the nucleus. Transcription factor that negatively regulates genes involved in anthocyanin biosynthesis. The polypeptide is Myb-related protein Zm38 (Zea mays (Maize)).